Reading from the N-terminus, the 469-residue chain is Protein POLLENLESS 3-LIKE 1 (469 aa).

The segment at 1 to 20 is disordered; it reads MRRRESRGAKGGGFLTPPPS. TPR repeat units follow at residues 88 to 121, 124 to 157, and 184 to 217; these read DSALKDMVVVLKQLNRFDEGIEAIKSFRYLCPFE, DSIDNLLLELYMKSGRITEVAELLEHKLRTLEQD, and ARILGNLAWVHLQLHNYGIAEQYYRNALSLEPDN. The stretch at 139-191 forms a coiled coil; it reads RITEVAELLEHKLRTLEQDKHYGGRIKIAKRSHEEQNNKTIEQEKARILGNLA. The segment covering 314 to 338 has biased composition (polar residues); sequence NIHKTNSHASSESVEQNSPGLTTQP. The disordered stretch occupies residues 314 to 339; the sequence is NIHKTNSHASSESVEQNSPGLTTQPR.

The protein belongs to the MS5 protein family. Expressed in floral and vegetative organs. Also barely detectable in leaves and stems.

It localises to the nucleus. Functionally, probably involved in the regulation of cell division. This is Protein POLLENLESS 3-LIKE 1 from Arabidopsis thaliana (Mouse-ear cress).